Here is a 101-residue protein sequence, read N- to C-terminus: Large ribosomal subunit protein uL23 (101 aa).

The protein belongs to the universal ribosomal protein uL23 family. As to quaternary structure, part of the 50S ribosomal subunit. Contacts protein L29, and trigger factor when it is bound to the ribosome.

One of the early assembly proteins it binds 23S rRNA. One of the proteins that surrounds the polypeptide exit tunnel on the outside of the ribosome. Forms the main docking site for trigger factor binding to the ribosome. In Aromatoleum aromaticum (strain DSM 19018 / LMG 30748 / EbN1) (Azoarcus sp. (strain EbN1)), this protein is Large ribosomal subunit protein uL23.